Consider the following 264-residue polypeptide: Exosome complex component Rrp4 (264 aa).

One can recognise an S1 motif domain in the interval 65–137; the sequence is GDNVLGKIVD…EVNNIELTTK (73 aa). In terms of domain architecture, KH spans 147–206; it reads RGGQIIKITSSKVPRVIGKGGSMINMIKKLTQSRIIVGQNGWIWISSKNPELEKLAIEAI. Positions 244 to 258 are enriched in acidic residues; the sequence is SLEEETQEETVMEND. The interval 244–264 is disordered; sequence SLEEETQEETVMENDVEARGP.

This sequence belongs to the RRP4 family. In terms of assembly, component of the archaeal exosome complex. Forms a trimer of Rrp4 and/or Csl4 subunits. The trimer associates with a hexameric ring-like arrangement composed of 3 Rrp41-Rrp42 heterodimers.

It is found in the cytoplasm. Non-catalytic component of the exosome, which is a complex involved in RNA degradation. Increases the RNA binding and the efficiency of RNA degradation. Confers strong poly(A) specificity to the exosome. This is Exosome complex component Rrp4 from Pyrococcus furiosus (strain ATCC 43587 / DSM 3638 / JCM 8422 / Vc1).